A 156-amino-acid chain; its full sequence is Small ribosomal subunit protein uS7 (156 aa).

The protein belongs to the universal ribosomal protein uS7 family. Part of the 30S ribosomal subunit. Contacts proteins S9 and S11.

One of the primary rRNA binding proteins, it binds directly to 16S rRNA where it nucleates assembly of the head domain of the 30S subunit. Is located at the subunit interface close to the decoding center, probably blocks exit of the E-site tRNA. The chain is Small ribosomal subunit protein uS7 from Campylobacter fetus subsp. fetus (strain 82-40).